The following is a 620-amino-acid chain: Chaperone protein HscA homolog (620 aa).

The protein belongs to the heat shock protein 70 family.

Its function is as follows. Chaperone involved in the maturation of iron-sulfur cluster-containing proteins. Has a low intrinsic ATPase activity which is markedly stimulated by HscB. The sequence is that of Chaperone protein HscA homolog from Bordetella petrii (strain ATCC BAA-461 / DSM 12804 / CCUG 43448).